We begin with the raw amino-acid sequence, 330 residues long: 4-hydroxythreonine-4-phosphate dehydrogenase (330 aa).

Substrate-binding residues include H136 and T137. Residues H166, H211, and H266 each contribute to the a divalent metal cation site. Residues K274, N283, and R292 each contribute to the substrate site.

This sequence belongs to the PdxA family. Homodimer. Zn(2+) serves as cofactor. Requires Mg(2+) as cofactor. Co(2+) is required as a cofactor.

It is found in the cytoplasm. The catalysed reaction is 4-(phosphooxy)-L-threonine + NAD(+) = 3-amino-2-oxopropyl phosphate + CO2 + NADH. The protein operates within cofactor biosynthesis; pyridoxine 5'-phosphate biosynthesis; pyridoxine 5'-phosphate from D-erythrose 4-phosphate: step 4/5. In terms of biological role, catalyzes the NAD(P)-dependent oxidation of 4-(phosphooxy)-L-threonine (HTP) into 2-amino-3-oxo-4-(phosphooxy)butyric acid which spontaneously decarboxylates to form 3-amino-2-oxopropyl phosphate (AHAP). This is 4-hydroxythreonine-4-phosphate dehydrogenase from Sodalis glossinidius (strain morsitans).